Reading from the N-terminus, the 277-residue chain is MELIEKHASFGGWQNVYRHYSQSLKCEMNVGVYLPPKAENEKLPVLYWLSGLTCNEQNFITKSGMQRYAAEHNIIVVAPDTSPRGSHVADADRYDLGQGAGFYLNATQAPWNEHYKMYDYIRNELPNLVMHHFPATARKSISGHSMGGLGALVLALRNPDEYASVSAFSPIVSPSQVPWGQQAFAAYLGENKDAWLDYDPVSLISQGQRVAEIMVDQGLSDDFYAEQLRTSNLEKICQEMNIKTLIRYHEGYDHSYYFVSSFIGEHIAYHANKLNMR.

Active-site charge relay system residues include S145, D221, and H254.

The protein belongs to the esterase D family.

The enzyme catalyses S-formylglutathione + H2O = formate + glutathione + H(+). Its function is as follows. Serine hydrolase involved in the detoxification of formaldehyde. Hydrolyzes S-formylglutathione to glutathione and formate. The protein is S-formylglutathione hydrolase FrmB (frmB) of Escherichia coli O6:H1 (strain CFT073 / ATCC 700928 / UPEC).